A 153-amino-acid polypeptide reads, in one-letter code: Putative pre-16S rRNA nuclease (153 aa).

Belongs to the YqgF nuclease family.

The protein resides in the cytoplasm. Could be a nuclease involved in processing of the 5'-end of pre-16S rRNA. This chain is Putative pre-16S rRNA nuclease, found in Koribacter versatilis (strain Ellin345).